The chain runs to 323 residues: Cyclin-H (323 aa).

At S5 the chain carries Phosphoserine; by CDK8. S132 is subject to Phosphoserine. A disordered region spans residues G296–L323. Position 304 is a phosphoserine; by CDK8 (S304). A compositionally biased stretch (acidic residues) spans E310–L323. At T315 the chain carries Phosphothreonine.

This sequence belongs to the cyclin family. Cyclin C subfamily. Associates primarily with CDK7 and MAT1 to form the CAK complex. CAK can further associate with the core-TFIIH to form the TFIIH basal transcription factor.

Its subcellular location is the nucleus. In terms of biological role, regulates CDK7, the catalytic subunit of the CDK-activating kinase (CAK) enzymatic complex. CAK activates the cyclin-associated kinases CDK1, CDK2, CDK4 and CDK6 by threonine phosphorylation. CAK complexed to the core-TFIIH basal transcription factor activates RNA polymerase II by serine phosphorylation of the repetitive C-terminal domain (CTD) of its large subunit (POLR2A), allowing its escape from the promoter and elongation of the transcripts. Involved in cell cycle control and in RNA transcription by RNA polymerase II. Its expression and activity are constant throughout the cell cycle. The chain is Cyclin-H (Ccnh) from Rattus norvegicus (Rat).